The primary structure comprises 78 residues: MIFARRLVLEVTYVSKRASVLNLKSENDHFLSRPRISESLPTSGEVGIAKVPAKLASALPPYSVFAPVSLSFVRMNCG.

This is an uncharacterized protein from Schizosaccharomyces pombe (strain 972 / ATCC 24843) (Fission yeast).